Reading from the N-terminus, the 379-residue chain is EP300-interacting inhibitor of differentiation 3 (379 aa).

Positions 32 to 58 (LKQVEEEEEVEALKVEVAAASDTESDT) form a coiled coil.

The protein belongs to the NSE4 family. As to quaternary structure, component of the SMC5-SMC6 complex which consists at least of SMC5, SMC6, NSMCE2, NSMCE1, NSMCE4A or EID3 and NSMCE3. NSMCE1, NSMCE4A or EID3 and NSMCE3 probably form a subcomplex that bridges the head domains of the SMC5:SMC6 heterodimer. Homodimer, and heterodimer with EID2. Interacts with the C-terminal region of CREBBP.

The protein localises to the nucleus. The protein resides in the cytoplasm. It is found in the chromosome. It localises to the telomere. Its function is as follows. Tissue-specific component of the SMC5-SMC6 complex, a complex involved in repair of DNA double-strand breaks by homologous recombination. The complex may promote sister chromatid homologous recombination by recruiting the SMC1-SMC3 cohesin complex to double-strand breaks. The complex is required for telomere maintenance via recombination and mediates sumoylation of shelterin complex (telosome) components. In terms of biological role, acts as a repressor of nuclear receptor-dependent transcription possibly by interfering with CREBBP-dependent coactivation. May function as a coinhibitor of other CREBBP/EP300-dependent transcription factors. This chain is EP300-interacting inhibitor of differentiation 3, found in Bos taurus (Bovine).